The primary structure comprises 429 residues: Enolase (429 aa).

Gln167 contributes to the (2R)-2-phosphoglycerate binding site. Glu209 functions as the Proton donor in the catalytic mechanism. Mg(2+)-binding residues include Asp246, Glu289, and Asp316. 4 residues coordinate (2R)-2-phosphoglycerate: Lys341, Arg370, Ser371, and Lys392. Catalysis depends on Lys341, which acts as the Proton acceptor.

This sequence belongs to the enolase family. Component of the RNA degradosome, a multiprotein complex involved in RNA processing and mRNA degradation. The cofactor is Mg(2+).

The protein localises to the cytoplasm. It is found in the secreted. Its subcellular location is the cell surface. The enzyme catalyses (2R)-2-phosphoglycerate = phosphoenolpyruvate + H2O. It participates in carbohydrate degradation; glycolysis; pyruvate from D-glyceraldehyde 3-phosphate: step 4/5. Its function is as follows. Catalyzes the reversible conversion of 2-phosphoglycerate (2-PG) into phosphoenolpyruvate (PEP). It is essential for the degradation of carbohydrates via glycolysis. This chain is Enolase, found in Ectopseudomonas mendocina (strain ymp) (Pseudomonas mendocina).